Reading from the N-terminus, the 522-residue chain is Ribose import ATP-binding protein RbsA 1 (522 aa).

2 ABC transporter domains span residues 8–243 and 249–496; these read LRIE…GRSI and RERP…VSTN. 40-47 contributes to the ATP binding site; sequence GENGAGKS. Positions 492 to 522 are disordered; that stretch reads AVSTNQYKPDKSDKPDASAGKTDQKEAPRGH. Residues 499-522 show a composition bias toward basic and acidic residues; that stretch reads KPDKSDKPDASAGKTDQKEAPRGH.

This sequence belongs to the ABC transporter superfamily. Ribose importer (TC 3.A.1.2.1) family. As to quaternary structure, the complex is composed of an ATP-binding protein (RbsA), two transmembrane proteins (RbsC) and a solute-binding protein (RbsB).

It is found in the cell membrane. The enzyme catalyses D-ribose(out) + ATP + H2O = D-ribose(in) + ADP + phosphate + H(+). Its function is as follows. Part of the ABC transporter complex RbsABC involved in ribose import. Responsible for energy coupling to the transport system. The polypeptide is Ribose import ATP-binding protein RbsA 1 (Streptomyces avermitilis (strain ATCC 31267 / DSM 46492 / JCM 5070 / NBRC 14893 / NCIMB 12804 / NRRL 8165 / MA-4680)).